Here is a 468-residue protein sequence, read N- to C-terminus: ATP synthase subunit beta (468 aa).

ATP is bound at residue 155–162 (GGAGVGKT).

This sequence belongs to the ATPase alpha/beta chains family. F-type ATPases have 2 components, CF(1) - the catalytic core - and CF(0) - the membrane proton channel. CF(1) has five subunits: alpha(3), beta(3), gamma(1), delta(1), epsilon(1). CF(0) has three main subunits: a(1), b(2) and c(9-12). The alpha and beta chains form an alternating ring which encloses part of the gamma chain. CF(1) is attached to CF(0) by a central stalk formed by the gamma and epsilon chains, while a peripheral stalk is formed by the delta and b chains.

It is found in the cell membrane. It catalyses the reaction ATP + H2O + 4 H(+)(in) = ADP + phosphate + 5 H(+)(out). Functionally, produces ATP from ADP in the presence of a proton gradient across the membrane. The catalytic sites are hosted primarily by the beta subunits. In Streptococcus gordonii (strain Challis / ATCC 35105 / BCRC 15272 / CH1 / DL1 / V288), this protein is ATP synthase subunit beta.